The chain runs to 97 residues: Essential MCU regulator, mitochondrial (97 aa).

The N-terminal 37 residues, 1–37 (MAARMGVLSVAGFRAAARAGGLLARPKQSTAVVPCRT), are a transit peptide targeting the mitochondrion. The Mitochondrial matrix segment spans residues 38–55 (VIASSAGAILPKPEKVSF). A helical membrane pass occupies residues 56-75 (GLLRVFTVVIPFLYIGTLIS). Residues 76–97 (KNFAAVLEEHDIFVPEDDDDDD) lie on the Mitochondrial intermembrane side of the membrane.

The protein belongs to the SMDT1/EMRE family. Component of the uniplex complex.

Its subcellular location is the mitochondrion inner membrane. Essential regulatory subunit of the mitochondrial calcium uniporter complex (uniplex), a complex that mediates calcium uptake into mitochondria. Required to bridge the calcium-sensing proteins micu1 with the calcium-conducting subunit mcu. Acts by mediating activation of mcu and retention of micu1 to the mcu pore, in order to ensure tight regulation of the uniplex complex and appropriate responses to intracellular calcium signaling. This chain is Essential MCU regulator, mitochondrial, found in Xenopus laevis (African clawed frog).